A 391-amino-acid chain; its full sequence is Shewanella-like protein phosphatase 2 (391 aa).

Mn(2+)-binding residues include aspartate 61, histidine 63, aspartate 97, and asparagine 132. Catalysis depends on histidine 133, which acts as the Proton donor. 2 residues coordinate Mn(2+): histidine 232 and histidine 295.

This sequence belongs to the metallophosphoesterase superfamily. SLP family. It depends on Mn(2+) as a cofactor. In terms of tissue distribution, expressed in roots and siliques (at protein level).

The protein localises to the cytoplasm. Its subcellular location is the cytosol. Its function is as follows. Shows phosphatase activity, hydrolyzing the artificial substrate para-nitrophenylphosphate (pNPP) in vitro. The polypeptide is Shewanella-like protein phosphatase 2 (Arabidopsis thaliana (Mouse-ear cress)).